A 647-amino-acid polypeptide reads, in one-letter code: MGKVIGIDLGTTNSCVAVMEGDKVKIIENAEGTRTTPSIVAYKDDEILVGQSAKRQAVTNPNNTLFAIKRLIGRRFDDKVVQKDIGMVPYKIAKADNGDAWVEINGKKLAPPQVSAEILKKMKKTAEDYLGEAVTEAVVTVPAYFNDSQRQATKDAGKIAGLDVKRIINEPTAAALAYGMDKKQGDSTVAVYDLGGGTFDVSIIEIADVDGEQQFEVLATNGDTFLGGEDFDSALIDFLVAEFKKDQDVNLKGDSLAMQRLKEAAEKAKIELSSAQSTEVNLPYITADSSGPKHLVVTISRSKLESLTEELVQRTMGPCKIALEDAGIKIGDIDDVILVGGQTRMPLVQQKVQEFFGQEPRKDVNPDEAVAAGAAIQGAVLSGEKTDVLLLDVTPLTLGIETMGGILTPIIEKNTMIPTKKSQVFSTAEDNQPAVSIQVYQGERKIANQNKQLGRFDLTDIPPAPRGLPQIEVSFDINADGIMNISATDKGTGKAQSIQIKADSGLSDEEVEQMIRDAEANAAEDEKFANLAQVRNEADGRIHAVQKALKDAADKVSDDEKSSVEAAISELEAAAKEDDHEEIKAKLEALDNAFLPVSQKIYADAGASAEGMDPNQFQQGADNAGESNQADDDVVDAEFTEVEDDKK.

A Phosphothreonine; by autocatalysis modification is found at threonine 198. The interval 606 to 634 (GASAEGMDPNQFQQGADNAGESNQADDDV) is disordered. Over residues 615 to 628 (NQFQQGADNAGESN) the composition is skewed to polar residues.

The protein belongs to the heat shock protein 70 family.

In terms of biological role, acts as a chaperone. This is Chaperone protein DnaK from Psychrobacter cryohalolentis (strain ATCC BAA-1226 / DSM 17306 / VKM B-2378 / K5).